Consider the following 166-residue polypeptide: EndA-like protein (166 aa).

It belongs to the tRNA-intron endonuclease family. Archaeal short subfamily.

The chain is EndA-like protein from Methanopyrus kandleri (strain AV19 / DSM 6324 / JCM 9639 / NBRC 100938).